We begin with the raw amino-acid sequence, 141 residues long: Hemoglobin subunit alpha (141 aa).

A Globin domain is found at 1-141; sequence VLSSKDKANI…VSTVLTSKYR (141 aa). Ser3 is subject to Phosphoserine. N6-succinyllysine occurs at positions 7 and 11. Lys16 is modified (N6-acetyllysine; alternate). Residue Lys16 is modified to N6-succinyllysine; alternate. Position 24 is a phosphotyrosine (Tyr24). Lys40 bears the N6-succinyllysine mark. Position 49 is a phosphoserine (Ser49). Residue His58 coordinates O2. Heme b is bound at residue His87. Ser102 bears the Phosphoserine mark. At Thr108 the chain carries Phosphothreonine. Ser124 is subject to Phosphoserine. 2 positions are modified to phosphothreonine: Thr134 and Thr137. Position 138 is a phosphoserine (Ser138).

It belongs to the globin family. Heterotetramer of two alpha chains and two beta chains. Red blood cells.

Involved in oxygen transport from the lung to the various peripheral tissues. Functionally, hemopressin acts as an antagonist peptide of the cannabinoid receptor CNR1. Hemopressin-binding efficiently blocks cannabinoid receptor CNR1 and subsequent signaling. This is Hemoglobin subunit alpha (HBA) from Vicugna pacos (Alpaca).